A 350-amino-acid polypeptide reads, in one-letter code: Biotin synthase (350 aa).

Residues 38 to 256 (NHVQVSTLLS…IAIARIMMPQ (219 aa)) form the Radical SAM core domain. [4Fe-4S] cluster is bound by residues Cys-53, Cys-57, and Cys-60. [2Fe-2S] cluster is bound by residues Cys-97, Cys-128, Cys-188, and Arg-260.

It belongs to the radical SAM superfamily. Biotin synthase family. In terms of assembly, homodimer. Requires [4Fe-4S] cluster as cofactor. It depends on [2Fe-2S] cluster as a cofactor.

The enzyme catalyses (4R,5S)-dethiobiotin + (sulfur carrier)-SH + 2 reduced [2Fe-2S]-[ferredoxin] + 2 S-adenosyl-L-methionine = (sulfur carrier)-H + biotin + 2 5'-deoxyadenosine + 2 L-methionine + 2 oxidized [2Fe-2S]-[ferredoxin]. The protein operates within cofactor biosynthesis; biotin biosynthesis; biotin from 7,8-diaminononanoate: step 2/2. Its function is as follows. Catalyzes the conversion of dethiobiotin (DTB) to biotin by the insertion of a sulfur atom into dethiobiotin via a radical-based mechanism. In Vibrio parahaemolyticus serotype O3:K6 (strain RIMD 2210633), this protein is Biotin synthase.